The chain runs to 88 residues: Apolipoprotein C-I (88 aa).

Positions 1 to 26 (MRLFLSLPVLVVVLAMVWEGPAPTQA) are cleaved as a signal peptide.

The protein belongs to the apolipoprotein C1 family.

It localises to the secreted. In terms of biological role, inhibitor of lipoprotein binding to the low density lipoprotein (LDL) receptor, LDL receptor-related protein, and very low density lipoprotein (VLDL) receptor. Associates with high density lipoproteins (HDL) and the triacylglycerol-rich lipoproteins in the plasma and makes up about 10% of the protein of the VLDL and 2% of that of HDL. Appears to interfere directly with fatty acid uptake and is also the major plasma inhibitor of cholesteryl ester transfer protein (CETP). Binds free fatty acids and reduces their intracellular esterification. Modulates the interaction of APOE with beta-migrating VLDL and inhibits binding of beta-VLDL to the LDL receptor-related protein. This is Apolipoprotein C-I (APOC1) from Neomonachus schauinslandi (Hawaiian monk seal).